Reading from the N-terminus, the 233-residue chain is Orotidine 5'-phosphate decarboxylase (233 aa).

Residues Asp12, Lys34, 61 to 70, Thr120, Arg181, Gln190, Gly210, and Arg211 each bind substrate; that span reads DLKFHDIPNT. Catalysis depends on Lys63, which acts as the Proton donor.

It belongs to the OMP decarboxylase family. Type 1 subfamily. As to quaternary structure, homodimer.

It carries out the reaction orotidine 5'-phosphate + H(+) = UMP + CO2. It functions in the pathway pyrimidine metabolism; UMP biosynthesis via de novo pathway; UMP from orotate: step 2/2. Functionally, catalyzes the decarboxylation of orotidine 5'-monophosphate (OMP) to uridine 5'-monophosphate (UMP). The polypeptide is Orotidine 5'-phosphate decarboxylase (Hahella chejuensis (strain KCTC 2396)).